The sequence spans 124 residues: Type-4 ice-structuring protein (124 aa).

A signal peptide spans Met1–Ala20. Position 21 is a pyrrolidone carboxylic acid (Gln21).

Belongs to the apolipoprotein A1/A4/E family.

It localises to the secreted. Functionally, antifreeze proteins lower the blood freezing point. The sequence is that of Type-4 ice-structuring protein from Paralichthys olivaceus (Bastard halibut).